Here is a 264-residue protein sequence, read N- to C-terminus: NAD-capped RNA hydrolase NudC (264 aa).

Substrate is bound at residue R70. C99 and C102 together coordinate Zn(2+). Residue E112 coordinates substrate. Zn(2+) is bound by residues C117 and C122. Y127 contributes to the substrate binding site. Residues 128 to 257 (PVICPSIIVA…TIALKLINAT (130 aa)) enclose the Nudix hydrolase domain. A divalent metal cation contacts are provided by A166, E182, and E186. The Nudix box motif lies at 167 to 188 (GFVEIGESFEQTVEREVFEETG). Position 200-207 (200-207 (QPWAFPNS)) interacts with substrate. E227 is an a divalent metal cation binding site. A250 is a binding site for substrate.

It belongs to the Nudix hydrolase family. NudC subfamily. As to quaternary structure, homodimer. Mg(2+) serves as cofactor. It depends on Mn(2+) as a cofactor. Zn(2+) is required as a cofactor.

It carries out the reaction a 5'-end NAD(+)-phospho-ribonucleoside in mRNA + H2O = a 5'-end phospho-adenosine-phospho-ribonucleoside in mRNA + beta-nicotinamide D-ribonucleotide + 2 H(+). The catalysed reaction is NAD(+) + H2O = beta-nicotinamide D-ribonucleotide + AMP + 2 H(+). The enzyme catalyses NADH + H2O = reduced beta-nicotinamide D-ribonucleotide + AMP + 2 H(+). Functionally, mRNA decapping enzyme that specifically removes the nicotinamide adenine dinucleotide (NAD) cap from a subset of mRNAs by hydrolyzing the diphosphate linkage to produce nicotinamide mononucleotide (NMN) and 5' monophosphate mRNA. The NAD-cap is present at the 5'-end of some mRNAs and stabilizes RNA against 5'-processing. Has preference for mRNAs with a 5'-end purine. Catalyzes the hydrolysis of a broad range of dinucleotide pyrophosphates. This chain is NAD-capped RNA hydrolase NudC, found in Actinobacillus succinogenes (strain ATCC 55618 / DSM 22257 / CCUG 43843 / 130Z).